The following is an 816-amino-acid chain: H(+)/Cl(-) exchange transporter 5 (816 aa).

Residues 1-124 (MAMWQGAMDN…WALIHSVSDA (124 aa)) lie on the Cytoplasmic side of the membrane. 2 helical membrane-spanning segments follow: residues 125–162 (FSGWLLMLLIGLLSGSLAGLIDISAHWMTDLKEGICTG) and 208–231 (VNYFMYVLWALLFAFLAVSLVKAF). The short motif at 237–241 (GSGIP) is the Selectivity filter part_1 element. A chloride-binding site is contributed by Ser238. The segment at residues 240–247 (IPEIKTIL) is an intramembrane region (helical). 2 helical membrane-spanning segments follow: residues 256–275 (LGKWTLVIKTITLVLAVSSG) and 281–300 (EGPLVHVACCCGNILCHCFN). Positions 279–283 (GKEGP) match the Selectivity filter part_2 motif. 2 intramembrane regions (helical) span residues 312 to 324 (VLSAAAAAGVSVA) and 328 to 336 (PIGGVLFSL). 5 helical membrane-spanning segments follow: residues 348-366 (LWRSFFAALVAAFTLRSIN), 389-414 (LVPFIVLGIFGGLWGALFIRTNIAWC), 422-442 (LGKYPVVEVLIVTAITAILAF), 498-518 (MWQLALTLILKIVITIFTFGM), and 523-542 (GLFIPSMAVGAIAGRLLGVG). Residues 523–527 (GLFIP) carry the Selectivity filter part_3 motif. Phe525 contacts chloride. Residues 570–584 (GLYAMVGAAACLGGV) constitute an intramembrane region (helical). Positions 585-587 (TRM) form an intramembrane region, note=Loop between two helices. An intramembrane region (helical) is located at residues 588–599 (TVSLVVIMFELT). Positions 600-604 (GGLEY) form an intramembrane region, note=Loop between two helices. A helical membrane pass occupies residues 605-622 (IVPLMAAAMTSKWVADAL). The Cytoplasmic segment spans residues 623 to 816 (GREGIYDAHI…NQDPESILFN (194 aa)). Tyr628 provides a ligand contact to chloride. 2 CBS domains span residues 656–720 (MKPR…ARKK) and 752–811 (ILDL…QDPE). Residues Thr666, 687–689 (YSG), and 794–797 (TKKD) each bind ATP.

It belongs to the chloride channel (TC 2.A.49) family. ClC-5/CLCN5 subfamily. Interacts with NEDD4 and NEDD4L. Ubiquitinated by NEDD4L in the presence of albumin; which promotes endocytosis and proteasomal degradation. As to expression, kidney specific.

The protein localises to the golgi apparatus membrane. It is found in the endosome membrane. Its subcellular location is the cell membrane. The catalysed reaction is 2 chloride(in) + H(+)(out) = 2 chloride(out) + H(+)(in). Functionally, proton-coupled chloride transporter. Functions as antiport system and exchanges chloride ions against protons. Important for normal acidification of the endosome lumen. May play an important role in renal tubular function. The CLC channel family contains both chloride channels and proton-coupled anion transporters that exchange chloride or another anion for protons. The absence of conserved gating glutamate residues is typical for family members that function as channels. This Rattus norvegicus (Rat) protein is H(+)/Cl(-) exchange transporter 5 (Clcn5).